Here is a 359-residue protein sequence, read N- to C-terminus: POU domain, class 5, transcription factor 1B (359 aa).

Disordered stretches follow at residues Met-1–Pro-53 and Gln-87–Thr-116. Ser-111 is modified (phosphoserine). In terms of domain architecture, POU-specific spans Asp-138–Asp-212. Positions Ala-229 to Ser-288 form a DNA-binding region, homeobox. Thr-235 bears the Phosphothreonine mark. Ser-236, Ser-288, and Ser-289 each carry phosphoserine. The disordered stretch occupies residues Ser-287 to Pro-322. A compositionally biased stretch (low complexity) spans Ala-299–Val-309. The residue at position 354 (Ser-354) is a Phosphoserine.

Belongs to the POU transcription factor family. Class-5 subfamily. As to expression, detected in epithelial cells of the prostate (at protein level). Detected at the mRNA level in several cancer tissues (breast, uterine cervix, lung, thyroid gland, esophagus, colon, urinary bladder, and glioma).

The protein localises to the nucleus. Its subcellular location is the cytoplasm. In terms of biological role, shows weak transcriptional activator activity. The polypeptide is POU domain, class 5, transcription factor 1B (POU5F1B) (Homo sapiens (Human)).